Consider the following 319-residue polypeptide: Thioredoxin reductase 1 (319 aa).

Residues 11-14 (SGPA), 40-41 (IA), glutamine 45, asparagine 54, valine 87, cysteine 145, aspartate 288, and 295-297 (RQA) contribute to the FAD site. Cysteine 142 and cysteine 145 are joined by a disulfide. Position 303 is a phosphoserine (serine 303).

Belongs to the class-II pyridine nucleotide-disulfide oxidoreductase family. Homodimer. FAD serves as cofactor.

The protein resides in the cytoplasm. It localises to the mitochondrion intermembrane space. The catalysed reaction is [thioredoxin]-dithiol + NADP(+) = [thioredoxin]-disulfide + NADPH + H(+). Central component in the thioredoxin system. Reduces thioredoxins 1 and 2. The protein is Thioredoxin reductase 1 (TRR1) of Saccharomyces cerevisiae (strain ATCC 204508 / S288c) (Baker's yeast).